Here is a 354-residue protein sequence, read N- to C-terminus: UDP-N-acetylglucosamine--N-acetylmuramyl-(pentapeptide) pyrophosphoryl-undecaprenol N-acetylglucosamine transferase (354 aa).

UDP-N-acetyl-alpha-D-glucosamine contacts are provided by residues threonine 11–glycine 13, arginine 164, serine 194, and glutamine 289.

It belongs to the glycosyltransferase 28 family. MurG subfamily.

The protein localises to the cell membrane. It carries out the reaction di-trans,octa-cis-undecaprenyl diphospho-N-acetyl-alpha-D-muramoyl-L-alanyl-D-glutamyl-meso-2,6-diaminopimeloyl-D-alanyl-D-alanine + UDP-N-acetyl-alpha-D-glucosamine = di-trans,octa-cis-undecaprenyl diphospho-[N-acetyl-alpha-D-glucosaminyl-(1-&gt;4)]-N-acetyl-alpha-D-muramoyl-L-alanyl-D-glutamyl-meso-2,6-diaminopimeloyl-D-alanyl-D-alanine + UDP + H(+). It functions in the pathway cell wall biogenesis; peptidoglycan biosynthesis. Cell wall formation. Catalyzes the transfer of a GlcNAc subunit on undecaprenyl-pyrophosphoryl-MurNAc-pentapeptide (lipid intermediate I) to form undecaprenyl-pyrophosphoryl-MurNAc-(pentapeptide)GlcNAc (lipid intermediate II). The polypeptide is UDP-N-acetylglucosamine--N-acetylmuramyl-(pentapeptide) pyrophosphoryl-undecaprenol N-acetylglucosamine transferase (Clostridium botulinum (strain Langeland / NCTC 10281 / Type F)).